A 207-amino-acid chain; its full sequence is Thiamine-phosphate synthase (207 aa).

Residues 36-40 (QLRMK) and Asn-68 contribute to the 4-amino-2-methyl-5-(diphosphooxymethyl)pyrimidine site. 2 residues coordinate Mg(2+): Asp-69 and Asp-88. 4-amino-2-methyl-5-(diphosphooxymethyl)pyrimidine is bound at residue Ser-106. 132 to 134 (TNT) serves as a coordination point for 2-[(2R,5Z)-2-carboxy-4-methylthiazol-5(2H)-ylidene]ethyl phosphate. Lys-135 is a binding site for 4-amino-2-methyl-5-(diphosphooxymethyl)pyrimidine. 2-[(2R,5Z)-2-carboxy-4-methylthiazol-5(2H)-ylidene]ethyl phosphate contacts are provided by residues Gly-162 and 182–183 (VS).

It belongs to the thiamine-phosphate synthase family. Mg(2+) serves as cofactor.

It catalyses the reaction 2-[(2R,5Z)-2-carboxy-4-methylthiazol-5(2H)-ylidene]ethyl phosphate + 4-amino-2-methyl-5-(diphosphooxymethyl)pyrimidine + 2 H(+) = thiamine phosphate + CO2 + diphosphate. It carries out the reaction 2-(2-carboxy-4-methylthiazol-5-yl)ethyl phosphate + 4-amino-2-methyl-5-(diphosphooxymethyl)pyrimidine + 2 H(+) = thiamine phosphate + CO2 + diphosphate. The catalysed reaction is 4-methyl-5-(2-phosphooxyethyl)-thiazole + 4-amino-2-methyl-5-(diphosphooxymethyl)pyrimidine + H(+) = thiamine phosphate + diphosphate. Its pathway is cofactor biosynthesis; thiamine diphosphate biosynthesis; thiamine phosphate from 4-amino-2-methyl-5-diphosphomethylpyrimidine and 4-methyl-5-(2-phosphoethyl)-thiazole: step 1/1. Condenses 4-methyl-5-(beta-hydroxyethyl)thiazole monophosphate (THZ-P) and 2-methyl-4-amino-5-hydroxymethyl pyrimidine pyrophosphate (HMP-PP) to form thiamine monophosphate (TMP). This chain is Thiamine-phosphate synthase, found in Methanococcus maripaludis (strain C5 / ATCC BAA-1333).